Here is a 225-residue protein sequence, read N- to C-terminus: Protein-L-isoaspartate O-methyltransferase (225 aa).

Ser-75 is a catalytic residue.

The protein belongs to the methyltransferase superfamily. L-isoaspartyl/D-aspartyl protein methyltransferase family.

It localises to the cytoplasm. It carries out the reaction [protein]-L-isoaspartate + S-adenosyl-L-methionine = [protein]-L-isoaspartate alpha-methyl ester + S-adenosyl-L-homocysteine. Its function is as follows. Catalyzes the methyl esterification of L-isoaspartyl residues in peptides and proteins that result from spontaneous decomposition of normal L-aspartyl and L-asparaginyl residues. It plays a role in the repair and/or degradation of damaged proteins. The chain is Protein-L-isoaspartate O-methyltransferase from Xylella fastidiosa (strain 9a5c).